A 540-amino-acid chain; its full sequence is MSTKKGGPKAASGKGQALLPGSKLRATAGKPRESRQLQRKASHPSKGSFSENPQAPAAPTAEDKAAIVIQCAFRQYLARRELARRCQERQEYLDEMEKLQKEAYLALVRQEQEAARRQREKEEAEERARREELQRRRRLLEAAFEGDLGEIRQVLKEVEQLMTREGVGYDEDGKARRLQRRVATVECEDSHGNTPLSEAAAGGQTMAIQLLAELGANPNTKGAFGRTPLYRAAFGGHLEAVEELLKIGADPRMYADDGSTPEQVASLAAVASVLQSWDLSLTEAMLKNMEAEQQRRAQEAQKHKENEAKRINIKVQQLAKEQQKCQKELQQAYCELNRRIMEHDKCERKFMGNTELTLQAIKDAEAQVDRLQQEAQKAEETLAMARLELREQTPEDEDTEPGLKCRVTELHDVLMKDVGDRIRADGRWPLVIDPSGQAATFLRYQDTNYVDTLNPEHLRPERIRLALLGALRYGKPLVFDLRQVNLFPVVQQQLEVVQTGLAQALLNRGLLAKEGYLSLLRPTDGPEYDPSQFQEARLEN.

Residues 1-17 (MSTKKGGPKAASGKGQA) show a composition bias toward low complexity. The segment at 1-62 (MSTKKGGPKA…PQAPAAPTAE (62 aa)) is disordered. In terms of domain architecture, IQ spans 62-91 (EDKAAIVIQCAFRQYLARRELARRCQERQE). ANK repeat units lie at residues 191–220 (HGNT…NPNT) and 224–253 (FGRT…DPRM). A coiled-coil region spans residues 281 to 388 (LTEAMLKNME…EETLAMARLE (108 aa)).

The sequence is that of IQ motif and ankyrin repeat domain-containing protein 1 from Mus musculus (Mouse).